The following is a 423-amino-acid chain: Serine hydroxymethyltransferase (423 aa).

(6S)-5,6,7,8-tetrahydrofolate contacts are provided by residues leucine 120 and 124–126 (GHL). N6-(pyridoxal phosphate)lysine is present on lysine 229. Position 353–355 (353–355 (SPF)) interacts with (6S)-5,6,7,8-tetrahydrofolate.

This sequence belongs to the SHMT family. As to quaternary structure, homodimer. Pyridoxal 5'-phosphate is required as a cofactor.

The protein localises to the cytoplasm. The enzyme catalyses (6R)-5,10-methylene-5,6,7,8-tetrahydrofolate + glycine + H2O = (6S)-5,6,7,8-tetrahydrofolate + L-serine. The protein operates within one-carbon metabolism; tetrahydrofolate interconversion. Its pathway is amino-acid biosynthesis; glycine biosynthesis; glycine from L-serine: step 1/1. Catalyzes the reversible interconversion of serine and glycine with tetrahydrofolate (THF) serving as the one-carbon carrier. This reaction serves as the major source of one-carbon groups required for the biosynthesis of purines, thymidylate, methionine, and other important biomolecules. Also exhibits THF-independent aldolase activity toward beta-hydroxyamino acids, producing glycine and aldehydes, via a retro-aldol mechanism. The protein is Serine hydroxymethyltransferase of Prochlorococcus marinus (strain MIT 9515).